Consider the following 400-residue polypeptide: Golgin-45 (400 aa).

A compositionally biased stretch (polar residues) spans 1-16 (MTTKNLETKVTVTSSP). The disordered stretch occupies residues 1–58 (MTTKNLETKVTVTSSPIRGAGDGMETEEPPKSVEVTSGVQSRKHHSLQSPWKKAVPSE). S15 bears the Phosphoserine mark. The Tankyrase-binding motif motif lies at 18 to 22 (RGAGD). S49 is modified (phosphoserine). A coiled-coil region spans residues 120–213 (NKELSEVKNV…QLERMSIQCD (94 aa)). T348 carries the post-translational modification Phosphothreonine. S353 is modified (phosphoserine). The tract at residues 394–400 (RGELIAL) is essential for interaction with GORASP2.

Interacts with GORASP2. Interacts with the GTP-bound form of RAB2, but not with other Golgi Rab proteins. Identified in a complex with RAB2 and GORASP2. Post-translationally, ADP-ribosylated by tankyrase TNKS and TNKS2. Poly-ADP-ribosylated protein is recognized by RNF146, followed by ubiquitination. Ubiquitinated by RNF146 when poly-ADP-ribosylated, leading to its degradation. Detected in adrenal gland.

Its subcellular location is the golgi apparatus membrane. The protein localises to the nucleus. It is found in the cytoplasm. Functionally, required for normal Golgi structure and for protein transport from the endoplasmic reticulum (ER) through the Golgi apparatus to the cell surface. This Homo sapiens (Human) protein is Golgin-45 (BLZF1).